Reading from the N-terminus, the 147-residue chain is Large ribosomal subunit protein bL9 (147 aa).

The protein belongs to the bacterial ribosomal protein bL9 family.

In terms of biological role, binds to the 23S rRNA. The protein is Large ribosomal subunit protein bL9 of Flavobacterium psychrophilum (strain ATCC 49511 / DSM 21280 / CIP 103535 / JIP02/86).